A 331-amino-acid chain; its full sequence is Methionyl-tRNA formyltransferase (331 aa).

111-114 (SLLP) contributes to the (6S)-5,6,7,8-tetrahydrofolate binding site.

Belongs to the Fmt family.

It carries out the reaction L-methionyl-tRNA(fMet) + (6R)-10-formyltetrahydrofolate = N-formyl-L-methionyl-tRNA(fMet) + (6S)-5,6,7,8-tetrahydrofolate + H(+). Functionally, attaches a formyl group to the free amino group of methionyl-tRNA(fMet). The formyl group appears to play a dual role in the initiator identity of N-formylmethionyl-tRNA by promoting its recognition by IF2 and preventing the misappropriation of this tRNA by the elongation apparatus. This is Methionyl-tRNA formyltransferase from Thermosynechococcus vestitus (strain NIES-2133 / IAM M-273 / BP-1).